A 188-amino-acid chain; its full sequence is MKGLIIVGSAKVGSHTTALSQYLKGHFEEHDFDVEIFDLAEQPIHQLDVSGASNLSESYKNNLQTLKTKAREADFFVLGSPNYHGSYSGILKNALDHLTMDDFKMKPVGLIGNSGGIVSSEPLSHLRLIVRSLLGIAVPTQIATHDTDFKKLDDGTYYLANEEFQLRARLFVDQIISFVKNSPYEHLK.

It belongs to the azoreductase type 2 family. In terms of assembly, homotetramer. FMN serves as cofactor.

In terms of biological role, catalyzes the reductive cleavage of azo bond in aromatic azo compounds to the corresponding amines. Requires NADPH, but not NADH, as an electron donor for its activity. The chain is FMN-dependent NADPH-azoreductase (azo1) from Staphylococcus saprophyticus subsp. saprophyticus (strain ATCC 15305 / DSM 20229 / NCIMB 8711 / NCTC 7292 / S-41).